The following is a 354-amino-acid chain: Uroporphyrinogen decarboxylase (354 aa).

Residues 35–39 (RQAGR), aspartate 84, tyrosine 159, serine 214, and histidine 333 contribute to the substrate site.

It belongs to the uroporphyrinogen decarboxylase family. In terms of assembly, homodimer.

Its subcellular location is the cytoplasm. The catalysed reaction is uroporphyrinogen III + 4 H(+) = coproporphyrinogen III + 4 CO2. It participates in porphyrin-containing compound metabolism; protoporphyrin-IX biosynthesis; coproporphyrinogen-III from 5-aminolevulinate: step 4/4. Catalyzes the decarboxylation of four acetate groups of uroporphyrinogen-III to yield coproporphyrinogen-III. This is Uroporphyrinogen decarboxylase from Nocardia farcinica (strain IFM 10152).